The chain runs to 352 residues: Spermidine/putrescine import ATP-binding protein PotA (352 aa).

An ABC transporter domain is found at Ile7–Ile237. Gly39–Thr46 serves as a coordination point for ATP.

This sequence belongs to the ABC transporter superfamily. Spermidine/putrescine importer (TC 3.A.1.11.1) family. As to quaternary structure, the complex is composed of two ATP-binding proteins (PotA), two transmembrane proteins (PotB and PotC) and a solute-binding protein (PotD).

It is found in the cell membrane. The enzyme catalyses ATP + H2O + polyamine-[polyamine-binding protein]Side 1 = ADP + phosphate + polyamineSide 2 + [polyamine-binding protein]Side 1.. In terms of biological role, part of the ABC transporter complex PotABCD involved in spermidine/putrescine import. Responsible for energy coupling to the transport system. The protein is Spermidine/putrescine import ATP-binding protein PotA of Clostridium acetobutylicum (strain ATCC 824 / DSM 792 / JCM 1419 / IAM 19013 / LMG 5710 / NBRC 13948 / NRRL B-527 / VKM B-1787 / 2291 / W).